The following is a 337-amino-acid chain: Eukaryotic translation initiation factor 3 subunit H (337 aa).

One can recognise an MPN domain in the interval 21-153; sequence VQCDGLAVMK…LKAYRLTPQA (133 aa).

Belongs to the eIF-3 subunit H family. Component of the eukaryotic translation initiation factor 3 (eIF-3) complex. The eIF-3 complex interacts with pix. Interacts with mxt.

The protein localises to the cytoplasm. Functionally, component of the eukaryotic translation initiation factor 3 (eIF-3) complex, which is involved in protein synthesis of a specialized repertoire of mRNAs and, together with other initiation factors, stimulates binding of mRNA and methionyl-tRNAi to the 40S ribosome. The eIF-3 complex specifically targets and initiates translation of a subset of mRNAs involved in cell proliferation. The polypeptide is Eukaryotic translation initiation factor 3 subunit H (Drosophila pseudoobscura pseudoobscura (Fruit fly)).